The chain runs to 301 residues: UDP-N-acetylenolpyruvoylglucosamine reductase 1 (301 aa).

The FAD-binding PCMH-type domain occupies 29–196; sequence KIGGPADILI…LEAVFQLQAG (168 aa). Residue Arg174 is part of the active site. Residue Ser225 is the Proton donor of the active site. Residue Glu295 is part of the active site.

Belongs to the MurB family. Requires FAD as cofactor.

It is found in the cytoplasm. The catalysed reaction is UDP-N-acetyl-alpha-D-muramate + NADP(+) = UDP-N-acetyl-3-O-(1-carboxyvinyl)-alpha-D-glucosamine + NADPH + H(+). It functions in the pathway cell wall biogenesis; peptidoglycan biosynthesis. Functionally, cell wall formation. In Bacillus cereus (strain ATCC 14579 / DSM 31 / CCUG 7414 / JCM 2152 / NBRC 15305 / NCIMB 9373 / NCTC 2599 / NRRL B-3711), this protein is UDP-N-acetylenolpyruvoylglucosamine reductase 1 (murB1).